A 459-amino-acid chain; its full sequence is Phosphomethylpyrimidine synthase (459 aa).

Substrate-binding positions include N80, M109, Y139, H175, S195–G197, D236–R239, and E275. H279 is a Zn(2+) binding site. Y302 is a substrate binding site. Residue H343 coordinates Zn(2+). The [4Fe-4S] cluster site is built by C423, C426, and C431.

Belongs to the ThiC family. The cofactor is [4Fe-4S] cluster.

The enzyme catalyses 5-amino-1-(5-phospho-beta-D-ribosyl)imidazole + S-adenosyl-L-methionine = 4-amino-2-methyl-5-(phosphooxymethyl)pyrimidine + CO + 5'-deoxyadenosine + formate + L-methionine + 3 H(+). Its pathway is cofactor biosynthesis; thiamine diphosphate biosynthesis. Its function is as follows. Catalyzes the synthesis of the hydroxymethylpyrimidine phosphate (HMP-P) moiety of thiamine from aminoimidazole ribotide (AIR) in a radical S-adenosyl-L-methionine (SAM)-dependent reaction. The sequence is that of Phosphomethylpyrimidine synthase from Gloeothece citriformis (strain PCC 7424) (Cyanothece sp. (strain PCC 7424)).